We begin with the raw amino-acid sequence, 303 residues long: Oxygen-dependent coproporphyrinogen-III oxidase (303 aa).

Residue Ser-93 participates in substrate binding. A divalent metal cation-binding residues include His-97 and His-107. His-107 functions as the Proton donor in the catalytic mechanism. Asn-109–Arg-111 serves as a coordination point for substrate. Residues His-149 and His-179 each coordinate a divalent metal cation. The important for dimerization stretch occupies residues Tyr-244–Arg-279. Gly-262–Arg-264 lines the substrate pocket.

The protein belongs to the aerobic coproporphyrinogen-III oxidase family. Homodimer. A divalent metal cation serves as cofactor.

The protein localises to the cytoplasm. It catalyses the reaction coproporphyrinogen III + O2 + 2 H(+) = protoporphyrinogen IX + 2 CO2 + 2 H2O. It functions in the pathway porphyrin-containing compound metabolism; protoporphyrin-IX biosynthesis; protoporphyrinogen-IX from coproporphyrinogen-III (O2 route): step 1/1. Functionally, involved in the heme biosynthesis. Catalyzes the aerobic oxidative decarboxylation of propionate groups of rings A and B of coproporphyrinogen-III to yield the vinyl groups in protoporphyrinogen-IX. The sequence is that of Oxygen-dependent coproporphyrinogen-III oxidase from Bordetella pertussis (strain Tohama I / ATCC BAA-589 / NCTC 13251).